Here is a 113-residue protein sequence, read N- to C-terminus: Retrotransposon Gag-like protein 8 (113 aa).

Belongs to the FAM127 family.

In Bos taurus (Bovine), this protein is Retrotransposon Gag-like protein 8 (RTL8A).